The primary structure comprises 386 residues: S-adenosylmethionine:tRNA ribosyltransferase-isomerase (386 aa).

Belongs to the QueA family. Monomer.

Its subcellular location is the cytoplasm. The enzyme catalyses 7-aminomethyl-7-carbaguanosine(34) in tRNA + S-adenosyl-L-methionine = epoxyqueuosine(34) in tRNA + adenine + L-methionine + 2 H(+). Its pathway is tRNA modification; tRNA-queuosine biosynthesis. In terms of biological role, transfers and isomerizes the ribose moiety from AdoMet to the 7-aminomethyl group of 7-deazaguanine (preQ1-tRNA) to give epoxyqueuosine (oQ-tRNA). The sequence is that of S-adenosylmethionine:tRNA ribosyltransferase-isomerase from Rickettsia canadensis (strain McKiel).